We begin with the raw amino-acid sequence, 261 residues long: Hydroxyethylthiazole kinase (261 aa).

Met-38 provides a ligand contact to substrate. Residues Arg-114 and Thr-159 each contribute to the ATP site. Gly-186 provides a ligand contact to substrate.

It belongs to the Thz kinase family. The cofactor is Mg(2+).

The catalysed reaction is 5-(2-hydroxyethyl)-4-methylthiazole + ATP = 4-methyl-5-(2-phosphooxyethyl)-thiazole + ADP + H(+). It participates in cofactor biosynthesis; thiamine diphosphate biosynthesis; 4-methyl-5-(2-phosphoethyl)-thiazole from 5-(2-hydroxyethyl)-4-methylthiazole: step 1/1. In terms of biological role, catalyzes the phosphorylation of the hydroxyl group of 4-methyl-5-beta-hydroxyethylthiazole (THZ). The protein is Hydroxyethylthiazole kinase of Streptococcus suis (strain 05ZYH33).